We begin with the raw amino-acid sequence, 152 residues long: uncharacterized protein (152 aa).

This is an uncharacterized protein from Rickettsia prowazekii (strain Madrid E).